The following is a 72-amino-acid chain: MLGGISIWQLLIVLAILVLIFGTKKLKNLGSDLGGAVKGFKEAVDKDTEAEDGKTAQHKVIDADVKKDDKSA.

The chain crosses the membrane as a helical span at residues 1–21; that stretch reads MLGGISIWQLLIVLAILVLIF.

This sequence belongs to the TatA/E family. The Tat system comprises two distinct complexes: a TatABC complex, containing multiple copies of TatA, TatB and TatC subunits, and a separate TatA complex, containing only TatA subunits. Substrates initially bind to the TatABC complex, which probably triggers association of the separate TatA complex to form the active translocon.

It localises to the cell inner membrane. Part of the twin-arginine translocation (Tat) system that transports large folded proteins containing a characteristic twin-arginine motif in their signal peptide across membranes. TatA could form the protein-conducting channel of the Tat system. This chain is Sec-independent protein translocase protein TatA, found in Marinomonas sp. (strain MWYL1).